We begin with the raw amino-acid sequence, 296 residues long: 4-hydroxy-tetrahydrodipicolinate synthase (296 aa).

T49 contributes to the pyruvate binding site. The active-site Proton donor/acceptor is Y137. The Schiff-base intermediate with substrate role is filled by K165. I207 contributes to the pyruvate binding site.

It belongs to the DapA family. Homotetramer; dimer of dimers.

The protein localises to the cytoplasm. It carries out the reaction L-aspartate 4-semialdehyde + pyruvate = (2S,4S)-4-hydroxy-2,3,4,5-tetrahydrodipicolinate + H2O + H(+). It functions in the pathway amino-acid biosynthesis; L-lysine biosynthesis via DAP pathway; (S)-tetrahydrodipicolinate from L-aspartate: step 3/4. Its function is as follows. Catalyzes the condensation of (S)-aspartate-beta-semialdehyde [(S)-ASA] and pyruvate to 4-hydroxy-tetrahydrodipicolinate (HTPA). The protein is 4-hydroxy-tetrahydrodipicolinate synthase of Rhodopseudomonas palustris (strain BisA53).